The chain runs to 100 residues: Small ribosomal subunit protein uS14c (100 aa).

The protein belongs to the universal ribosomal protein uS14 family. In terms of assembly, part of the 30S ribosomal subunit.

Its subcellular location is the plastid. It localises to the chloroplast. Functionally, binds 16S rRNA, required for the assembly of 30S particles. The chain is Small ribosomal subunit protein uS14c from Tetradesmus obliquus (Green alga).